Reading from the N-terminus, the 185-residue chain is Ribosome-recycling factor (185 aa).

This sequence belongs to the RRF family.

It is found in the cytoplasm. Its function is as follows. Responsible for the release of ribosomes from messenger RNA at the termination of protein biosynthesis. May increase the efficiency of translation by recycling ribosomes from one round of translation to another. The chain is Ribosome-recycling factor from Ehrlichia chaffeensis (strain ATCC CRL-10679 / Arkansas).